The chain runs to 119 residues: Large ribosomal subunit protein uL22 (119 aa).

The protein belongs to the universal ribosomal protein uL22 family. As to quaternary structure, part of the 50S ribosomal subunit.

In terms of biological role, this protein binds specifically to 23S rRNA; its binding is stimulated by other ribosomal proteins, e.g. L4, L17, and L20. It is important during the early stages of 50S assembly. It makes multiple contacts with different domains of the 23S rRNA in the assembled 50S subunit and ribosome. Its function is as follows. The globular domain of the protein is located near the polypeptide exit tunnel on the outside of the subunit, while an extended beta-hairpin is found that lines the wall of the exit tunnel in the center of the 70S ribosome. In Rickettsia rickettsii (strain Iowa), this protein is Large ribosomal subunit protein uL22.